Reading from the N-terminus, the 377-residue chain is MAAAVRFQVVRALPMSRPAISAAATSVFCSSSHRQLHHAVIPHGKGGRSSVSGVVATVFGATGFLGRYVVNHLGRMGSQVIIPYRCDIYDTMHLRLMGDLGQLIFLEWDARDKDSIRKAVQHSNVVINLIGREWETRNFDFEDVFVNIPRAIAQASKEAGVERFIHVSHLNASMKSSAKSLRSKAVGEKEVRTVFPDAIIIRPSDMFGREDRFLNHFANYRWFLAVPLVSLGFKTVKQPVYVADVSKGIANATKNPDAIGKTFAFTGPNRYLLFHLVKYIFGMTHRTFIPYPLPRFVYSWIGRLFGLSPFEPWTTKDKVERIHISDVMATDLPGLEDLGVQPTPLELKSIEVLRRHRTYRWLSSEIEETKPAKTVNY.

Residues 1-35 (MAAAVRFQVVRALPMSRPAISAAATSVFCSSSHRQ) constitute a mitochondrion transit peptide. Residue lysine 175 is modified to N6-succinyllysine. An N6-acetyllysine mark is found at lysine 189 and lysine 370.

Belongs to the complex I NDUFA9 subunit family. Complex I is composed of 45 different subunits. This a component of the hydrophobic protein fraction. Interacts with BLOC1S1. Interacts with SLC2A4. Interacts with CLOCK. Interacts with RAB5IF. The cofactor is FAD. Post-translationally, acetylated on lysine residues. BLOC1S1 is required for acetylation. Acetylated by CLOCK in a circadian manner. As to expression, expressed by the principal cells of the epididymis. Detected in flagella of epididymal sperm (at protein level).

It is found in the mitochondrion matrix. Accessory subunit of the mitochondrial membrane respiratory chain NADH dehydrogenase (Complex I), that is believed not to be involved in catalysis. Complex I functions in the transfer of electrons from NADH to the respiratory chain. The immediate electron acceptor for the enzyme is believed to be ubiquinone. This Rattus norvegicus (Rat) protein is NADH dehydrogenase [ubiquinone] 1 alpha subcomplex subunit 9, mitochondrial.